We begin with the raw amino-acid sequence, 71 residues long: UPF0346 protein BCB4264_A2283 (71 aa).

Belongs to the UPF0346 family.

This Bacillus cereus (strain B4264) protein is UPF0346 protein BCB4264_A2283.